The chain runs to 184 residues: Chaperone protein YcdY (184 aa).

It belongs to the TorD/DmsD family. Interacts with YcdX.

Acts as a chaperone that increases YcdX activity, maybe by facilitating the correct insertion of the zinc ions into the catalytic site of YcdX. Involved in the swarming motility process. The sequence is that of Chaperone protein YcdY (ycdY) from Escherichia coli (strain K12).